We begin with the raw amino-acid sequence, 133 residues long: uncharacterized protein (133 aa).

The region spanning 3 to 106 is the HIT domain; sequence IFTKIINREL…PTRSLSDFGF (104 aa). The Histidine triad motif motif lies at 90–94; that stretch reads HLHIH.

This is an uncharacterized protein from Mycobacterium tuberculosis (strain ATCC 25618 / H37Rv).